We begin with the raw amino-acid sequence, 51 residues long: Basic phospholipase A2 homolog BmatTX-I (51 aa).

C28 and C44 are disulfide-bonded.

In terms of assembly, monomer. In terms of tissue distribution, expressed by the venom gland.

The protein resides in the secreted. Functionally, snake venom phospholipase A2 homolog that lacks enzymatic activity. Shows high myotoxic activity, neutrophile activation (demonstrated by activation induction of IL-1beta production), slight cytotoxicity against Jurkat (leukemia T) and SK-BR-3 (breast adenocarcinoma) tumor cell lines, and slight antiparasitic activity against promastigote forms of Leishmania amazonensis. A model of myotoxic mechanism has been proposed: an apo Lys49-PLA2 is activated by the entrance of a hydrophobic molecule (e.g. fatty acid) at the hydrophobic channel of the protein leading to a reorientation of a monomer. This reorientation causes a transition between 'inactive' to 'active' states, causing alignment of C-terminal and membrane-docking sites (MDoS) side-by-side and putting the membrane-disruption sites (MDiS) in the same plane, exposed to solvent and in a symmetric position for both monomers. The MDoS region stabilizes the toxin on membrane by the interaction of charged residues with phospholipid head groups. Subsequently, the MDiS region destabilizes the membrane with penetration of hydrophobic residues. This insertion causes a disorganization of the membrane, allowing an uncontrolled influx of ions (i.e. calcium and sodium), and eventually triggering irreversible intracellular alterations and cell death. In Bothrops mattogrossensis (Pitviper), this protein is Basic phospholipase A2 homolog BmatTX-I.